Consider the following 316-residue polypeptide: 4-diphosphocytidyl-2-C-methyl-D-erythritol kinase (316 aa).

Residue lysine 23 is part of the active site. 108 to 118 (PVAGGMAGGSA) contributes to the ATP binding site. The active site involves aspartate 150.

This sequence belongs to the GHMP kinase family. IspE subfamily.

It catalyses the reaction 4-CDP-2-C-methyl-D-erythritol + ATP = 4-CDP-2-C-methyl-D-erythritol 2-phosphate + ADP + H(+). It participates in isoprenoid biosynthesis; isopentenyl diphosphate biosynthesis via DXP pathway; isopentenyl diphosphate from 1-deoxy-D-xylulose 5-phosphate: step 3/6. In terms of biological role, catalyzes the phosphorylation of the position 2 hydroxy group of 4-diphosphocytidyl-2C-methyl-D-erythritol. The polypeptide is 4-diphosphocytidyl-2-C-methyl-D-erythritol kinase (Mycobacterium avium (strain 104)).